The chain runs to 189 residues: Protein GrpE (189 aa).

Residues 1 to 24 (MADEQTVDTQNPEANQAPEASGDD) are disordered.

The protein belongs to the GrpE family. As to quaternary structure, homodimer.

It is found in the cytoplasm. Its function is as follows. Participates actively in the response to hyperosmotic and heat shock by preventing the aggregation of stress-denatured proteins, in association with DnaK and GrpE. It is the nucleotide exchange factor for DnaK and may function as a thermosensor. Unfolded proteins bind initially to DnaJ; upon interaction with the DnaJ-bound protein, DnaK hydrolyzes its bound ATP, resulting in the formation of a stable complex. GrpE releases ADP from DnaK; ATP binding to DnaK triggers the release of the substrate protein, thus completing the reaction cycle. Several rounds of ATP-dependent interactions between DnaJ, DnaK and GrpE are required for fully efficient folding. The protein is Protein GrpE of Pseudomonas fluorescens (strain Pf0-1).